Consider the following 91-residue polypeptide: N.vectensis toxin 8 (91 aa).

A signal peptide spans 1 to 26 (MNSLLKVAVVCLVMLVACFVPRVILT). Intrachain disulfides connect Cys-45/Cys-76, Cys-47/Cys-67, and Cys-60/Cys-77.

In terms of tissue distribution, expressed in ectodermal gland cells.

Has toxic effects on zebrafish larvae. It causes contractile paralysis and twitching of the tail within 20 minutes, followed by death within 30 minutes. Does not show any toxicity when injected into arthropods (cherry shrimps or grass shrimps). The polypeptide is N.vectensis toxin 8 (Nematostella vectensis (Starlet sea anemone)).